We begin with the raw amino-acid sequence, 1285 residues long: Transmembrane channel-like protein 1 (1285 aa).

Positions 1–29 are disordered; sequence MQEAARRASLRKEHTPTNEKFGDLSKQDS. Over 1–164 the chain is Cytoplasmic; it reads MQEAARRASL…KIKRIESHFG (164 aa). A helical transmembrane segment spans residues 165–202; it reads SVVSSYFTFLRWIVFVNIMITLIALVFVVLPETLADSV. At 203-260 the chain is on the extracellular side; it reads ANEGRFNRTKTRKQIPANERVHADELAVVWHYDGYLRYSPLFYGYYSDDPFLGNKIKY. An N-linked (GalNAc...) asparagine glycan is attached at Asn-209. The helical transmembrane segment at 261-292 threads the bilayer; sequence ALPLAYFMVTLTIFAYSFFAILRKMAANARMS. Residues 293–349 are Cytoplasmic-facing; the sequence is KLSGSKAEQYIFNWKLFTGWDYTIGNSETASNTVMAVVIKLRESIADIKKDAHGKFR. The helical transmembrane segment at 350–381 threads the bilayer; it reads LLQFSLRVFANIIICAMLGFSIYCIIFAVQKS. The Extracellular portion of the chain corresponds to 382–388; the sequence is QVQDDGN. A helical transmembrane segment spans residues 389–416; it reads LFTKNQVPSVVSTITHVFPMIFDLIGKM. Over 417–420 the chain is Cytoplasmic; sequence ENYH. The chain crosses the membrane as a helical span at residues 421 to 455; it reads PRTALRAHLGRVLILYTVNYITLIFALFEKMTALR. The Extracellular portion of the chain corresponds to 456–667; it reads DRVNSTSTSS…NHDGHNNDIC (212 aa). The disordered stretch occupies residues 458-488; the sequence is VNSTSTSSSHRTKRQQGGWNPNMQRPPPYAS. Residues Cys-667 and Cys-816 are joined by a disulfide bond. The helical transmembrane segment at 668–705 threads the bilayer; sequence WETIIGQEIVKLVTMDLIFTILSILVIDLFRGLWIKYC. The segment at 696–720 is required for interaction with tmie; the sequence is LFRGLWIKYCSSWWCWDIETTFPEY. Over 706-724 the chain is Cytoplasmic; that stretch reads SSWWCWDIETTFPEYGEFK. The chain crosses the membrane as a helical span at residues 725–745; it reads VAENVLHIINNQGMIWLGLFF. Over 746-748 the chain is Extracellular; sequence APL. Residues 749–771 form a helical membrane-spanning segment; the sequence is LPAINNIKLIILMYIRGWAVMTC. Residues 766–773 form a required for interaction with tmie region; it reads WAVMTCNV. Residues 772–785 lie on the Cytoplasmic side of the membrane; it reads NVPAREIFRASRSS. A helical membrane pass occupies residues 786 to 809; that stretch reads NFYLGILLIWLLLCTLPVGFVIAS. The Extracellular segment spans residues 810 to 852; sequence MSPSRSCGPFARYQHFYTVVTREIEKRVDQTVLSYIRHIASPG. Residues 853 to 886 traverse the membrane as a helical segment; it reads VVIPIILFLILIIYFLFSLVRGLREANTDLQAQL. Over 887–1285 the chain is Cytoplasmic; sequence VHERTEEKKK…DEDDSPRQID (399 aa). Disordered stretches follow at residues 940–962 and 1114–1285; these read ADHA…DDER and TIKE…RQID. The span at 948 to 961 shows a compositional bias: acidic residues; it reads SSEESDINEDEDDE. Composition is skewed to basic and acidic residues over residues 1121 to 1131, 1146 to 1156, and 1167 to 1182; these read DPGKSDKKQTS, DEARALREKMK, and TVEE…ESEF. Over residues 1197 to 1208 the composition is skewed to acidic residues; the sequence is TEEENEEEETDS.

Belongs to the TMC family. In terms of assembly, homodimer. Interacts with calm-1 and tmie to form the MET channel. As to expression, expressed in the ASH polymodal avoidance neurons. Also expressed in other sensory neurons, including the ADF, ASE, ADL, AQR, PQR, URX and PHA cells.

It localises to the cell membrane. It catalyses the reaction Na(+)(in) = Na(+)(out). It carries out the reaction Ca(2+)(in) = Ca(2+)(out). The enzyme catalyses K(+)(in) = K(+)(out). Its function is as follows. Pore-forming subunit of the mechanotransducer (MET) non-selective cation channel complex. The MET complex is composed of symmetric dimeric MET channels, each channel comprising two copies of pore-forming ion-conducting transmembrane TMC subunits and auxiliary proteins including the transmembrane inner ear protein/tmie, the calcium-binding protein/calm-1 and arrestin domain protein arrd-6. Sodium ions are the most permeable, whereas calcium and potassium have lower indices. Sodium-sensor ion channel that acts specifically in salt taste chemosensation. Required for salt-evoked neuronal activity and behavioral avoidance of high concentrations of NaCl. This Caenorhabditis elegans protein is Transmembrane channel-like protein 1 (tmc-1).